Here is a 215-residue protein sequence, read N- to C-terminus: MGKVYDRFEERLEIQAIADDITSKYVPPHVNIFYCLGGITLTCFLVQVATGFAMTFYYRPTVTEAFASVQYLMTEVNFGWLIRSIHRWSASMMVLMMILHVFRVYLTGGFKKPRELTWVTGVILAVLTVSFGVTGYSLPWDQIGYWAVKIVTGVPEAIPVIGSPLVELLRGSVSVGQSTLTRFYSLHTFILPLLTAVFMPMHFLMIRKQGIPGPL.

A helical membrane pass occupies residues 32 to 52 (IFYCLGGITLTCFLVQVATGF). C35 contacts heme c. Heme b contacts are provided by H86 and H100. Transmembrane regions (helical) follow at residues 90–110 (ASMM…TGGF), 116–136 (LTWV…VTGY), and 186–206 (LHTF…FLMI). Heme b is bound by residues H187 and H202.

The protein belongs to the cytochrome b family. PetB subfamily. The 4 large subunits of the cytochrome b6-f complex are cytochrome b6, subunit IV (17 kDa polypeptide, PetD), cytochrome f and the Rieske protein, while the 4 small subunits are PetG, PetL, PetM and PetN. The complex functions as a dimer. Requires heme b as cofactor. Heme c serves as cofactor.

Its subcellular location is the plastid. It is found in the chloroplast thylakoid membrane. Its function is as follows. Component of the cytochrome b6-f complex, which mediates electron transfer between photosystem II (PSII) and photosystem I (PSI), cyclic electron flow around PSI, and state transitions. This chain is Cytochrome b6, found in Pinus thunbergii (Japanese black pine).